We begin with the raw amino-acid sequence, 462 residues long: MASPAFHPLDCPDPAQVSFGTDGLRGHVGSAITSTLALQVGFWCGRVLPADGPVLIGMDSRTSGSMLVSALAAGLTAAGREVWTLGLCPTPAVPGLIRRFGAAGGLMVSASHNPPEDNGIKVFGADGSKLGSALQSRIEAGLRGEEPASAQAHAFGASHQRSDLLDLYKQDLLSSVRHQRLDGVPIVLDLCWGSATACGAAVFSELGADVTVLHGEADGERINVDCGSTHLEPLRRAVLERGAAMGFAFDGDADRMLAVDGRGRIVDGDHVLFLWGSALQDSGVLPDQRLVATVMSNLGFERAWQARGGQLDRTPVGDQHVHAAMVRSGAALGGEQSGHILSSAHGLSGDGVLTALQLASLCHGQGITLADWLDRSFEAYPQKLVNVRVPDRSRRKAWADCQSLTALVQEAERSMAGDGRVLVRASGTEPLLRVMVEAADPKAVEHWTQRLAEAADQHLNAA.

Catalysis depends on serine 111, which acts as the Phosphoserine intermediate. Mg(2+)-binding residues include serine 111, aspartate 250, aspartate 252, and aspartate 254. Position 111 is a phosphoserine (serine 111).

The protein belongs to the phosphohexose mutase family. Mg(2+) is required as a cofactor. Post-translationally, activated by phosphorylation.

It catalyses the reaction alpha-D-glucosamine 1-phosphate = D-glucosamine 6-phosphate. Its function is as follows. Catalyzes the conversion of glucosamine-6-phosphate to glucosamine-1-phosphate. This Synechococcus sp. (strain WH7803) protein is Phosphoglucosamine mutase.